A 206-amino-acid chain; its full sequence is Large ribosomal subunit protein uL4 (206 aa).

Residues 63 to 98 form a disordered region; sequence MYRQKGTGRARHSSARAPQFRGGGKAHGPVPHSHAH. The segment covering 64-76 has biased composition (basic residues); that stretch reads YRQKGTGRARHSS.

It belongs to the universal ribosomal protein uL4 family. Part of the 50S ribosomal subunit.

Functionally, one of the primary rRNA binding proteins, this protein initially binds near the 5'-end of the 23S rRNA. It is important during the early stages of 50S assembly. It makes multiple contacts with different domains of the 23S rRNA in the assembled 50S subunit and ribosome. Its function is as follows. Forms part of the polypeptide exit tunnel. In Chelativorans sp. (strain BNC1), this protein is Large ribosomal subunit protein uL4.